Reading from the N-terminus, the 189-residue chain is Probable nicotinate-nucleotide adenylyltransferase (189 aa).

It belongs to the NadD family.

The enzyme catalyses nicotinate beta-D-ribonucleotide + ATP + H(+) = deamido-NAD(+) + diphosphate. The protein operates within cofactor biosynthesis; NAD(+) biosynthesis; deamido-NAD(+) from nicotinate D-ribonucleotide: step 1/1. Catalyzes the reversible adenylation of nicotinate mononucleotide (NaMN) to nicotinic acid adenine dinucleotide (NaAD). This chain is Probable nicotinate-nucleotide adenylyltransferase, found in Staphylococcus aureus (strain N315).